The chain runs to 949 residues: MAQVAVSTLPVEEESSSETRMVVTFLVSALESMCKELAKSKAEVACIAVYETDVFVVGTERGCAFVNARTDFQKDFAKYCVAEGLCEVKPPCPVNGMQVHSGETEILRKAVEDYFCFCYGKALGTTVMVPVPYEKMLRDQSAVVVQGLPEGVAFQHPENYDLATLKWILENKAGISFIINRPFLGPESQLGGPGMVTDAERSIVSPSESCGPINVKTEPMEDSGISLKAEAVSVKKESEDPNYYQYNMQGSHPSSTSNEVIEMELPMEDSTPLVPSEEPNEDPEAEVKIEGNTNSSSVTNSAAGVEDLNIVQVTVPDNEKERLSSIEKIKQLREQVNDLFSRKFGEAIGVDFPVKVPYRKITFNPGCVVIDGMPPGVVFKAPGYLEISSMRRILEAAEFIKFTVIRPLPGLELSNVGKRKIDQEGRVFQEKWERAYFFVEVQNIPTCLICKQSMSVSKEYNLRRHYQTNHSKHYDQYMERMRDEKLHELKKGLRKYLLGSSDTECPEQKQVFANPSPTQKSPVQPVEDLAGNLWEKLREKIRSFVAYSIAIDEITDINNTTQLAIFIRGVDENFDVSEELLDTVPMTGTKSGNEIFSRVEKSLKNFCIDWSKLVSVASTGTPAMVDANNGLVTKLKSRVATFCKGAELKSICCIIHPESLCAQKLKMDHVMDVVVKSVNWICSRGLNHSEFTTLLYELDSQYGSLLYYTEIKWLSRGLVLKRFFESLEEIDSFMSSRGKPLPQLSSIDWIRDLAFLVDMTMHLNALNISLQGHSQIVTQMYDLIRAFLAKLCLWETHLTRNNLAHFPTLKLASRNESDGLNYIPKIAELQTEFQKRLSDFKLYESELTLFSSPFSTKIDSVHEELQMEVIDLQCNTVLKTKYDKVGIPEFYKYLWGSYPKYKHHCAKILSMFGSTYICEQLFSIMKLSKTKYCSQLKDSQWDSVLHIAT.

GTF2I-like repeat units lie at residues 98-192 (QVHS…QLGG) and 323-417 (LSSI…SNVG).

It belongs to the TFII-I family. As to expression, ubiquitous.

It localises to the nucleus. This is General transcription factor II-I repeat domain-containing protein 2A (GTF2IRD2) from Homo sapiens (Human).